Here is a 450-residue protein sequence, read N- to C-terminus: Phosphoglucosamine mutase (450 aa).

Catalysis depends on Ser101, which acts as the Phosphoserine intermediate. Mg(2+) contacts are provided by Ser101, Asp240, Asp242, and Asp244. Phosphoserine is present on Ser101.

The protein belongs to the phosphohexose mutase family. Mg(2+) serves as cofactor. Activated by phosphorylation.

It carries out the reaction alpha-D-glucosamine 1-phosphate = D-glucosamine 6-phosphate. Functionally, catalyzes the conversion of glucosamine-6-phosphate to glucosamine-1-phosphate. In Streptococcus pneumoniae (strain Hungary19A-6), this protein is Phosphoglucosamine mutase.